The primary structure comprises 256 residues: Metallo-beta-lactamase type 2 (256 aa).

The N-terminal stretch at 1 to 29 (MKNTLLKLGVCVSLLGITPFVSTISSVQA) is a signal peptide. 5 residues coordinate Zn(2+): His-115, His-117, Asp-119, His-178, and Cys-197. Substrate contacts are provided by Lys-200 and Asn-209. Zn(2+) is bound at residue His-239.

The protein belongs to the metallo-beta-lactamase superfamily. Class-B beta-lactamase family. Monomer. It depends on Zn(2+) as a cofactor.

The protein resides in the periplasm. It catalyses the reaction a beta-lactam + H2O = a substituted beta-amino acid. Its activity is regulated as follows. Inhibited by chelating agents such as EDTA. Its function is as follows. Confers resistance to the different beta-lactams antibiotics (penicillin, cephalosporin and carbapenem) via the hydrolysis of the beta-lactam ring. Benzylpenicillin is a better substrate than cephalosporin C and ampicillin. The sequence is that of Metallo-beta-lactamase type 2 from Bacillus cereus.